The following is a 245-amino-acid chain: Glycerophosphodiester phosphodiesterase (245 aa).

The region spanning 2–241 is the GP-PDE domain; that stretch reads TKIFAHRGFK…DFPDRAVKIR (240 aa). His-7 acts as the Proton acceptor in catalysis. 2 residues coordinate a divalent metal cation: Glu-34 and Asp-36. His-49 functions as the Proton donor in the catalytic mechanism. Glu-110 serves as a coordination point for a divalent metal cation.

This sequence belongs to the glycerophosphoryl diester phosphodiesterase family. Ni(2+) is required as a cofactor. Requires Co(2+) as cofactor. It depends on Mn(2+) as a cofactor.

The catalysed reaction is a sn-glycero-3-phosphodiester + H2O = an alcohol + sn-glycerol 3-phosphate + H(+). With respect to regulation, inhibited by EDTA and various organic solvents such as chloroform, toluene or benzene. Glycerophosphodiester phosphodiesterase hydrolyzes glycerophosphodiesters into glycerol-3-phosphate (G3P) and the corresponding alcohol. Can hydrolyze the model substrate bis-(p-nitrophenyl phosphate) (bis(pNPP)) to p-nitrophenol. Can also catalyze the degradation of diphenyl phosphate (DPHP) to phenyl phosphate (PHP). DPHP is an aryl phosphate ester used as a chemical additive and an industrial catalyst that can easily spread to the environment and exhibits toxicity toward organisms. The sequence is that of Glycerophosphodiester phosphodiesterase from Bacillus altitudinis.